Consider the following 337-residue polypeptide: Mycothiol acetyltransferase (337 aa).

2 N-acetyltransferase domains span residues 11-151 (LDER…FELP) and 154-337 (VRLR…MYRK). Glu37 contributes to the 1D-myo-inositol 2-(L-cysteinylamino)-2-deoxy-alpha-D-glucopyranoside binding site. Acetyl-CoA is bound at residue 81–83 (LVI). Glu182 provides a ligand contact to 1D-myo-inositol 2-(L-cysteinylamino)-2-deoxy-alpha-D-glucopyranoside. A disordered region spans residues 210 to 246 (RPTGSGDGDVADGGSTDGGPADSGSADGGAGEGGTGD). Residues 221-234 (DGGSTDGGPADSGS) show a composition bias toward low complexity. The segment covering 235–246 (ADGGAGEGGTGD) has biased composition (gly residues). 2 residues coordinate 1D-myo-inositol 2-(L-cysteinylamino)-2-deoxy-alpha-D-glucopyranoside: Lys257 and Glu271. Residues 275–277 (VGV) and 282–288 (QGGGLGR) each bind acetyl-CoA. Tyr309 lines the 1D-myo-inositol 2-(L-cysteinylamino)-2-deoxy-alpha-D-glucopyranoside pocket. 314-319 (NTAAIR) is a binding site for acetyl-CoA.

This sequence belongs to the acetyltransferase family. MshD subfamily. Monomer.

The catalysed reaction is 1D-myo-inositol 2-(L-cysteinylamino)-2-deoxy-alpha-D-glucopyranoside + acetyl-CoA = mycothiol + CoA + H(+). Catalyzes the transfer of acetyl from acetyl-CoA to desacetylmycothiol (Cys-GlcN-Ins) to form mycothiol. In Streptosporangium roseum (strain ATCC 12428 / DSM 43021 / JCM 3005 / KCTC 9067 / NCIMB 10171 / NRRL 2505 / NI 9100), this protein is Mycothiol acetyltransferase.